Consider the following 98-residue polypeptide: NADH-ubiquinone oxidoreductase chain 4L (98 aa).

Transmembrane regions (helical) follow at residues 1 to 21 (MNLI…GLIF), 26 to 46 (IINI…LFVL), and 61 to 81 (LYIL…VVIL).

Belongs to the complex I subunit 4L family.

The protein localises to the mitochondrion membrane. It catalyses the reaction a ubiquinone + NADH + 5 H(+)(in) = a ubiquinol + NAD(+) + 4 H(+)(out). Functionally, core subunit of the mitochondrial membrane respiratory chain NADH dehydrogenase (Complex I) that is believed to belong to the minimal assembly required for catalysis. Complex I functions in the transfer of electrons from NADH to the respiratory chain. The immediate electron acceptor for the enzyme is believed to be ubiquinone. In Dictyostelium discoideum (Social amoeba), this protein is NADH-ubiquinone oxidoreductase chain 4L (nad4L).